The primary structure comprises 312 residues: Formimidoylglutamase (312 aa).

Mn(2+) is bound by residues H123, D152, H154, D156, C243, and D245.

The protein belongs to the arginase family. The cofactor is Mn(2+).

It catalyses the reaction N-formimidoyl-L-glutamate + H2O = formamide + L-glutamate. The protein operates within amino-acid degradation; L-histidine degradation into L-glutamate; L-glutamate from N-formimidoyl-L-glutamate (hydrolase route): step 1/1. In terms of biological role, catalyzes the conversion of N-formimidoyl-L-glutamate to L-glutamate and formamide. The sequence is that of Formimidoylglutamase from Pseudomonas fluorescens (strain ATCC BAA-477 / NRRL B-23932 / Pf-5).